Here is a 274-residue protein sequence, read N- to C-terminus: 2,3,4,5-tetrahydropyridine-2,6-dicarboxylate N-succinyltransferase (274 aa).

Residues R107 and D144 each contribute to the substrate site.

Belongs to the transferase hexapeptide repeat family. Homotrimer.

The protein localises to the cytoplasm. The enzyme catalyses (S)-2,3,4,5-tetrahydrodipicolinate + succinyl-CoA + H2O = (S)-2-succinylamino-6-oxoheptanedioate + CoA. It functions in the pathway amino-acid biosynthesis; L-lysine biosynthesis via DAP pathway; LL-2,6-diaminopimelate from (S)-tetrahydrodipicolinate (succinylase route): step 1/3. This chain is 2,3,4,5-tetrahydropyridine-2,6-dicarboxylate N-succinyltransferase, found in Paracoccus denitrificans (strain Pd 1222).